Here is a 120-residue protein sequence, read N- to C-terminus: Ribonuclease P protein component (120 aa).

This sequence belongs to the RnpA family. Consists of a catalytic RNA component (M1 or rnpB) and a protein subunit.

The enzyme catalyses Endonucleolytic cleavage of RNA, removing 5'-extranucleotides from tRNA precursor.. Its function is as follows. RNaseP catalyzes the removal of the 5'-leader sequence from pre-tRNA to produce the mature 5'-terminus. It can also cleave other RNA substrates such as 4.5S RNA. The protein component plays an auxiliary but essential role in vivo by binding to the 5'-leader sequence and broadening the substrate specificity of the ribozyme. This chain is Ribonuclease P protein component, found in Rickettsia bellii (strain RML369-C).